The primary structure comprises 496 residues: Nucleolar and spindle-associated protein 1-B (496 aa).

3 disordered regions span residues 44 to 206, 250 to 294, and 338 to 496; these read YPES…HEAH, TPVS…STAN, and KSSS…VPVK. A compositionally biased stretch (polar residues) spans 56 to 69; that stretch reads GCTSLTDTDELNSS. Residues 121-134 are compositionally biased toward basic and acidic residues; it reads TQDKDCLESKKKEV. Over residues 150-159 the composition is skewed to polar residues; sequence QDTSKQNNSE. Over residues 261-281 the composition is skewed to low complexity; the sequence is SRLSLLSPLPRTTGASPSRTP. 2 stretches are compositionally biased toward polar residues: residues 376-396 and 403-423; these read NTTI…NKAN and AQNT…QASL. A compositionally biased stretch (low complexity) spans 447–459; that stretch reads SGSNSNVSVLKNN. Basic and acidic residues predominate over residues 467–485; sequence TREERRKQHELDRKGKRDQ.

It belongs to the NUSAP family. As to quaternary structure, interacts with DNA, microtubules, ipo7, kpna2 and kpnb1. Microtubule stabilization is inhibited by ipo7 and kpna2, while microtubule bundling is inhibited by kpnb1. Active GTP-bound ran causes dissociation of ipo7 and kpnb1.

It localises to the cytoplasm. The protein localises to the nucleus. The protein resides in the cytoskeleton. It is found in the spindle. Functionally, microtubule-associated protein with the capacity to bundle and stabilize microtubules. May associate with chromosomes and promote the organization of meiotic or mitotic spindle microtubules around them. The protein is Nucleolar and spindle-associated protein 1-B (nusap1-b) of Xenopus laevis (African clawed frog).